The following is a 404-amino-acid chain: uncharacterized protein (404 aa).

Positions 1–22 (MASSINNSSQPTVPSISNNSHG) are enriched in polar residues. The disordered stretch occupies residues 1-110 (MASSINNSSQ…QQTPVKRRRR (110 aa)). The residue at position 47 (Thr-47) is a Phosphothreonine. A compositionally biased stretch (polar residues) spans 87–104 (SRGSSLKSHLETESQQTP). The PHD-type zinc finger occupies 117–166 (VDYCSACGGRGLFICCEGCPCSFHLSCLEPPLTPENIPEGSWFCVTCSIK).

This is an uncharacterized protein from Schizosaccharomyces pombe (strain 972 / ATCC 24843) (Fission yeast).